Here is a 433-residue protein sequence, read N- to C-terminus: Steroid C26-monooxygenase (433 aa).

Position 202 (G202) interacts with substrate. C377 provides a ligand contact to heme.

The protein belongs to the cytochrome P450 family. It depends on heme as a cofactor.

The catalysed reaction is cholest-4-en-3-one + 6 reduced [2Fe-2S]-[ferredoxin] + 3 O2 + 5 H(+) = (25S)-3-oxocholest-4-en-26-oate + 6 oxidized [2Fe-2S]-[ferredoxin] + 4 H2O. Its pathway is steroid metabolism; cholesterol degradation. Its function is as follows. Involved in the utilization of cholesterol as the sole carbon and energy source by degrading the side chain during infection. Primarily catalyzes the sequential oxidation of the terminal methyl of cholest-4-en-3-one into (25S)-26-hydroxycholest-4-en-3-one (alcohol), (25S)-26-oxocholest-4-en-3-one (aldehyde), to finally yield the carboxylic acid (25S)-3-oxocholest-4-en-26-oate. Also able to sequentially oxidize cholesterol itself, not only cholest-4-en-3-one. The polypeptide is Steroid C26-monooxygenase (cyp125) (Mycobacterium bovis (strain ATCC BAA-935 / AF2122/97)).